Consider the following 101-residue polypeptide: Urease subunit beta (101 aa).

The protein belongs to the urease beta subunit family. As to quaternary structure, heterotrimer of UreA (gamma), UreB (beta) and UreC (alpha) subunits. Three heterotrimers associate to form the active enzyme.

It localises to the cytoplasm. The catalysed reaction is urea + 2 H2O + H(+) = hydrogencarbonate + 2 NH4(+). It participates in nitrogen metabolism; urea degradation; CO(2) and NH(3) from urea (urease route): step 1/1. The protein is Urease subunit beta of Burkholderia vietnamiensis (strain G4 / LMG 22486) (Burkholderia cepacia (strain R1808)).